A 591-amino-acid polypeptide reads, in one-letter code: Aspartate--tRNA ligase (591 aa).

Position 173 (Glu173) interacts with L-aspartate. The tract at residues 197-200 is aspartate; it reads QLFK. Residue Arg219 coordinates L-aspartate. Residues 219–221 and Gln228 contribute to the ATP site; that span reads RDE. An L-aspartate-binding site is contributed by His448. Glu482 is an ATP binding site. Arg489 lines the L-aspartate pocket. An ATP-binding site is contributed by 534–537; that stretch reads GLDR.

The protein belongs to the class-II aminoacyl-tRNA synthetase family. Type 1 subfamily. As to quaternary structure, homodimer.

Its subcellular location is the cytoplasm. It carries out the reaction tRNA(Asp) + L-aspartate + ATP = L-aspartyl-tRNA(Asp) + AMP + diphosphate. Catalyzes the attachment of L-aspartate to tRNA(Asp) in a two-step reaction: L-aspartate is first activated by ATP to form Asp-AMP and then transferred to the acceptor end of tRNA(Asp). The protein is Aspartate--tRNA ligase of Shewanella sp. (strain ANA-3).